The sequence spans 361 residues: tRNA/tmRNA (uracil-C(5))-methyltransferase (361 aa).

The S-adenosyl-L-methionine site is built by Gln185, Tyr213, Asn218, Glu234, and Asp294. The active-site Nucleophile is the Cys319. Glu353 serves as the catalytic Proton acceptor.

Belongs to the class I-like SAM-binding methyltransferase superfamily. RNA M5U methyltransferase family. TrmA subfamily.

The enzyme catalyses uridine(54) in tRNA + S-adenosyl-L-methionine = 5-methyluridine(54) in tRNA + S-adenosyl-L-homocysteine + H(+). It catalyses the reaction uridine(341) in tmRNA + S-adenosyl-L-methionine = 5-methyluridine(341) in tmRNA + S-adenosyl-L-homocysteine + H(+). Its function is as follows. Dual-specificity methyltransferase that catalyzes the formation of 5-methyluridine at position 54 (m5U54) in all tRNAs, and that of position 341 (m5U341) in tmRNA (transfer-mRNA). This chain is tRNA/tmRNA (uracil-C(5))-methyltransferase, found in Pseudomonas entomophila (strain L48).